We begin with the raw amino-acid sequence, 440 residues long: Thymidine phosphorylase (440 aa).

Belongs to the thymidine/pyrimidine-nucleoside phosphorylase family. Homodimer.

The catalysed reaction is thymidine + phosphate = 2-deoxy-alpha-D-ribose 1-phosphate + thymine. It functions in the pathway pyrimidine metabolism; dTMP biosynthesis via salvage pathway; dTMP from thymine: step 1/2. The enzymes which catalyze the reversible phosphorolysis of pyrimidine nucleosides are involved in the degradation of these compounds and in their utilization as carbon and energy sources, or in the rescue of pyrimidine bases for nucleotide synthesis. This chain is Thymidine phosphorylase, found in Burkholderia pseudomallei (strain K96243).